We begin with the raw amino-acid sequence, 271 residues long: Formamidopyrimidine-DNA glycosylase (271 aa).

The active-site Schiff-base intermediate with DNA is P2. The active-site Proton donor is E3. K58 (proton donor; for beta-elimination activity) is an active-site residue. The DNA site is built by H91, R110, and R152. The FPG-type zinc-finger motif lies at 237-271; sequence LVYGREGQPCVHCGRPIRCETIGQRSSYFCTRCQR. R261 serves as the catalytic Proton donor; for delta-elimination activity.

This sequence belongs to the FPG family. As to quaternary structure, monomer. Zn(2+) is required as a cofactor.

It carries out the reaction Hydrolysis of DNA containing ring-opened 7-methylguanine residues, releasing 2,6-diamino-4-hydroxy-5-(N-methyl)formamidopyrimidine.. The enzyme catalyses 2'-deoxyribonucleotide-(2'-deoxyribose 5'-phosphate)-2'-deoxyribonucleotide-DNA = a 3'-end 2'-deoxyribonucleotide-(2,3-dehydro-2,3-deoxyribose 5'-phosphate)-DNA + a 5'-end 5'-phospho-2'-deoxyribonucleoside-DNA + H(+). Involved in base excision repair of DNA damaged by oxidation or by mutagenic agents. Acts as a DNA glycosylase that recognizes and removes damaged bases. Has a preference for oxidized purines, such as 7,8-dihydro-8-oxoguanine (8-oxoG). Has AP (apurinic/apyrimidinic) lyase activity and introduces nicks in the DNA strand. Cleaves the DNA backbone by beta-delta elimination to generate a single-strand break at the site of the removed base with both 3'- and 5'-phosphates. In Syntrophotalea carbinolica (strain DSM 2380 / NBRC 103641 / GraBd1) (Pelobacter carbinolicus), this protein is Formamidopyrimidine-DNA glycosylase.